A 137-amino-acid chain; its full sequence is Glutamate mutase sigma subunit (137 aa).

A B12-binding domain is found at 3-137 (EVNLVLGVIG…KALKEDLGLM (135 aa)). Adenosylcob(III)alamin contacts are provided by residues 13–17 (ADVHA), H16, 61–63 (SSL), and 93–97 (NLVVG).

This sequence belongs to the methylaspartate mutase GlmS subunit family. In terms of assembly, heterotetramer composed of 2 epsilon subunits (GlmE) and 2 sigma subunits (GlmS). GlmE exists as a homodimer and GlmS as a monomer. It depends on adenosylcob(III)alamin as a cofactor.

The catalysed reaction is (2S,3S)-3-methyl-L-aspartate = L-glutamate. It functions in the pathway amino-acid degradation; L-glutamate degradation via mesaconate pathway; acetate and pyruvate from L-glutamate: step 1/4. Its function is as follows. Catalyzes the carbon skeleton rearrangement of L-glutamate to L-threo-3-methylaspartate ((2S,3S)-3-methylaspartate). The polypeptide is Glutamate mutase sigma subunit (Carboxydothermus hydrogenoformans (strain ATCC BAA-161 / DSM 6008 / Z-2901)).